We begin with the raw amino-acid sequence, 371 residues long: MKLKTLQLENYRNYEEVTLECHPDVNILIGENAQGKTNLLESIYTLALAKSHRTSNDKELIRFNSEYAKIEGVLNYRHGTMPLTMFITKKGKQVKVNHLEQSRLTQYVGHLNVVLFAPEDLNIVKGSPQIRRRFIDMELGQISAVYLNDLAQYQRILKQKNNYLKQLQLGQKQDTTMLEVLNQQFAQYALNVTLRREHFIKELESLAKPIHAGITNERETLSLTYLPSIKLSDMSKGEQTLWDEVITLLNDNIKREMDRGVCLFGPHRDDLGFNVNDMDAQTYGSQGQQRTTALSIKLAEIELMNIEVGEYPILLLDDVLSELDDSRQTHLLSTIQHKVQTFVTTTSVDGIDHEIMNNAKLYRINQGEIIK.

An ATP-binding site is contributed by Gly30–Thr37.

The protein belongs to the RecF family.

It localises to the cytoplasm. Functionally, the RecF protein is involved in DNA metabolism; it is required for DNA replication and normal SOS inducibility. RecF binds preferentially to single-stranded, linear DNA. It also seems to bind ATP. The chain is DNA replication and repair protein RecF from Staphylococcus haemolyticus (strain JCSC1435).